The chain runs to 54 residues: Large ribosomal subunit protein bL33B (54 aa).

Belongs to the bacterial ribosomal protein bL33 family.

This is Large ribosomal subunit protein bL33B from Saccharopolyspora erythraea (strain ATCC 11635 / DSM 40517 / JCM 4748 / NBRC 13426 / NCIMB 8594 / NRRL 2338).